Here is a 160-residue protein sequence, read N- to C-terminus: Lipoprotein signal peptidase (160 aa).

2 helical membrane passes run 60 to 80 and 84 to 104; these read IEWL…AFFI and LPFL…AGTV. Active-site residues include D118 and D132. A helical transmembrane segment spans residues 128–148; it reads FNIADSCLTVGVIGLLLLYIV.

Belongs to the peptidase A8 family.

It is found in the cell membrane. It carries out the reaction Release of signal peptides from bacterial membrane prolipoproteins. Hydrolyzes -Xaa-Yaa-Zaa-|-(S,diacylglyceryl)Cys-, in which Xaa is hydrophobic (preferably Leu), and Yaa (Ala or Ser) and Zaa (Gly or Ala) have small, neutral side chains.. The protein operates within protein modification; lipoprotein biosynthesis (signal peptide cleavage). Functionally, this protein specifically catalyzes the removal of signal peptides from prolipoproteins. This Dehalococcoides mccartyi (strain CBDB1) protein is Lipoprotein signal peptidase.